Reading from the N-terminus, the 461-residue chain is GTPase Der (461 aa).

EngA-type G domains follow at residues 25–188 and 198–371; these read PVVA…PNVA and RRVA…ASWD. GTP contacts are provided by residues 31–38, 78–82, 140–143, 204–211, 251–255, and 316–319; these read GRPNVGKS, DTGGW, NKVD, GKPNVGKS, DTAGL, and NKWD. The 83-residue stretch at 372-454 folds into the KH-like domain; that stretch reads TRIATGPLNI…PIRINVRVRE (83 aa).

This sequence belongs to the TRAFAC class TrmE-Era-EngA-EngB-Septin-like GTPase superfamily. EngA (Der) GTPase family. Associates with the 50S ribosomal subunit.

In terms of biological role, GTPase that plays an essential role in the late steps of ribosome biogenesis. The sequence is that of GTPase Der from Mycobacterium leprae (strain TN).